A 346-amino-acid polypeptide reads, in one-letter code: Golgi to ER traffic protein 4 (346 aa).

Residues 317 to 346 (GQNQGGSRRTPQGRSQSKTVEAPPASMELD) form a disordered region. Over residues 321–335 (GGSRRTPQGRSQSKT) the composition is skewed to polar residues.

The protein belongs to the GET4 family. Component of the get4/get5/sgt2 sorting complex.

It localises to the cytoplasm. Functionally, component of the get4/get5/sgt2 sorting complex involved in the GET (guided entry of TA proteins) pathway that leads to the insertion of tail-anchored (TA) proteins into the endoplasmic reticulum. Get4 and get5 form an obligate complex that catalyzes the transfer of tail-anchored proteins destined to the endoplasmic reticulum from sgt2 to the cytosolic targeting factor which then targets the TA protein to the ER membrane via get1/get2. The protein is Golgi to ER traffic protein 4 of Aspergillus fumigatus (strain ATCC MYA-4609 / CBS 101355 / FGSC A1100 / Af293) (Neosartorya fumigata).